We begin with the raw amino-acid sequence, 265 residues long: tRNA pseudouridine synthase A (265 aa).

The Nucleophile role is filled by Asp53. Tyr111 is a binding site for substrate.

The protein belongs to the tRNA pseudouridine synthase TruA family. Homodimer.

The enzyme catalyses uridine(38/39/40) in tRNA = pseudouridine(38/39/40) in tRNA. Its function is as follows. Formation of pseudouridine at positions 38, 39 and 40 in the anticodon stem and loop of transfer RNAs. This Acinetobacter baumannii (strain ACICU) protein is tRNA pseudouridine synthase A.